The sequence spans 630 residues: Putative adenylate cyclase regulatory protein (630 aa).

The segment at 10-46 (CAVCREPWAEGALELFPCRHVFCTVCVVERWRCPSCQ) adopts an RING-type zinc-finger fold. LRR repeat units follow at residues 184 to 206 (FLVHLEVDGSRGVTDITGLCRLK), 207 to 230 (TLEALSLDSCINITKGFDKICALP), 231 to 251 (QLTSLSLCQTNVTDKDLRCIH), 255 to 277 (KLKVLRYSSCHEITDLTAIGGMR), 278 to 301 (SLEKLSLSGCWNVTKGLEELCKFS), 302 to 324 (NLRELDISGCLVLGSAVVLKNLI), 325 to 347 (NLKVLSVSNCKNFKDLNGLERLV), 348 to 370 (NLDKLNLSGCHGVSSLGFVANLS), 371 to 393 (NLKELDISGCESLVCFDGLQDLN), 394 to 416 (NLEVLYLRDVKSFTNVGAIKNLS), 417 to 439 (KMRELDLSGCERITSLSGLETLK), 440 to 462 (GLEELSLEGCGEIMSFDPIWSLH), 463 to 485 (HLRVLYVSECGNLEDLSGLEGIT), 486 to 508 (GLEELYLHGCRKCTNFGPIWNLR), 509 to 531 (NVCVVELSCCENLEDLSGLQCLT), 532 to 554 (GLEELYLIGCEEITPIGVVGNLR), 555 to 577 (NLKCLSTCWCANLKELGGLDRLV), and 578 to 599 (NLEKLDLSGCCGLSSSVFMELM).

May interact with adenylate cyclase to regulate its activity. Its function is as follows. May be involved in the postranscriptional regulation of genes in VSG expression sites. The protein is Putative adenylate cyclase regulatory protein (ESAG8C) of Trypanosoma equiperdum.